The chain runs to 507 residues: Bifunctional purine biosynthesis protein PurH (507 aa).

One can recognise an MGS-like domain in the interval 1–149; it reads MSESKRIKTA…KNYNDVIIVA (149 aa).

It belongs to the PurH family.

The enzyme catalyses (6R)-10-formyltetrahydrofolate + 5-amino-1-(5-phospho-beta-D-ribosyl)imidazole-4-carboxamide = 5-formamido-1-(5-phospho-D-ribosyl)imidazole-4-carboxamide + (6S)-5,6,7,8-tetrahydrofolate. It carries out the reaction IMP + H2O = 5-formamido-1-(5-phospho-D-ribosyl)imidazole-4-carboxamide. Its pathway is purine metabolism; IMP biosynthesis via de novo pathway; 5-formamido-1-(5-phospho-D-ribosyl)imidazole-4-carboxamide from 5-amino-1-(5-phospho-D-ribosyl)imidazole-4-carboxamide (10-formyl THF route): step 1/1. The protein operates within purine metabolism; IMP biosynthesis via de novo pathway; IMP from 5-formamido-1-(5-phospho-D-ribosyl)imidazole-4-carboxamide: step 1/1. This chain is Bifunctional purine biosynthesis protein PurH, found in Bacteroides thetaiotaomicron (strain ATCC 29148 / DSM 2079 / JCM 5827 / CCUG 10774 / NCTC 10582 / VPI-5482 / E50).